A 228-amino-acid polypeptide reads, in one-letter code: MGNKTHPTGFRLGVTEDWRSMWYADSSNFGKYLNTDLEVREFIRERLKNASVSRIQIERPAKNALVTIHTARPGIVIGKKGEDIDRLRGEVAARMGVPVHINIEEIRKPEADSKLVAESIAGQLERRVMFRRALKRAVGNAQRVGAQGIKVQVSGRLNGSEIARTEWYREGRVPLHTLRADIDYGFAEAKTTYGVIGVKVWIFKGEIIDTENEGAPAERVKRAAAAQG.

In terms of domain architecture, KH type-2 spans 39 to 107; it reads VREFIRERLK…PVHINIEEIR (69 aa).

Belongs to the universal ribosomal protein uS3 family. As to quaternary structure, part of the 30S ribosomal subunit. Forms a tight complex with proteins S10 and S14.

Binds the lower part of the 30S subunit head. Binds mRNA in the 70S ribosome, positioning it for translation. The chain is Small ribosomal subunit protein uS3 from Halorhodospira halophila (strain DSM 244 / SL1) (Ectothiorhodospira halophila (strain DSM 244 / SL1)).